The chain runs to 234 residues: Glucosamine-6-phosphate deaminase (234 aa).

Aspartate 63 acts as the Proton acceptor; for enolization step in catalysis. The For ring-opening step role is filled by asparagine 129. Histidine 131 acts as the Proton acceptor; for ring-opening step in catalysis. The For ring-opening step role is filled by glutamate 136.

The protein belongs to the glucosamine/galactosamine-6-phosphate isomerase family. NagB subfamily.

It catalyses the reaction alpha-D-glucosamine 6-phosphate + H2O = beta-D-fructose 6-phosphate + NH4(+). It functions in the pathway amino-sugar metabolism; N-acetylneuraminate degradation; D-fructose 6-phosphate from N-acetylneuraminate: step 5/5. Catalyzes the reversible isomerization-deamination of glucosamine 6-phosphate (GlcN6P) to form fructose 6-phosphate (Fru6P) and ammonium ion. This chain is Glucosamine-6-phosphate deaminase, found in Listeria monocytogenes serotype 4a (strain HCC23).